The sequence spans 880 residues: Leucine--tRNA ligase (880 aa).

The 'HIGH' region motif lies at Pro-46–His-56. The 'KMSKS' region motif lies at Lys-638–Ser-642. Residue Lys-641 coordinates ATP.

This sequence belongs to the class-I aminoacyl-tRNA synthetase family.

The protein resides in the cytoplasm. It carries out the reaction tRNA(Leu) + L-leucine + ATP = L-leucyl-tRNA(Leu) + AMP + diphosphate. The sequence is that of Leucine--tRNA ligase from Stenotrophomonas maltophilia (strain K279a).